Here is a 446-residue protein sequence, read N- to C-terminus: Sulfoquinovose isomerase (446 aa).

The protein belongs to the SqvD family.

It catalyses the reaction 6-sulfo-beta-D-quinovose = 6-deoxy-6-sulfo-D-fructose. Its function is as follows. Part of the sulfo-TAL (or sulfo-SFT) pathway, a D-sulfoquinovose degradation pathway that produces sulfolactate (SL). Catalyzes the isomerization of sulfoquinovose (SQ) to 6-deoxy-6-sulfo-D-fructose (SF). This chain is Sulfoquinovose isomerase, found in Priestia aryabhattai (Bacillus aryabhattai).